Here is a 174-residue protein sequence, read N- to C-terminus: UPF0340 protein MW2038 (174 aa).

This sequence belongs to the UPF0340 family.

This Staphylococcus aureus (strain MW2) protein is UPF0340 protein MW2038.